The chain runs to 185 residues: Proton-translocating ferredoxin:NAD(+) oxidoreductase complex subunit G (185 aa).

Residues 14–34 traverse the membrane as a helical segment; the sequence is TKNLTITCFISGIIIAAVYYI. Thr161 carries the FMN phosphoryl threonine modification.

It belongs to the RnfG family. The complex is composed of six subunits: RnfA, RnfB, RnfC, RnfD, RnfE and RnfG. It depends on FMN as a cofactor.

The protein resides in the cell membrane. Its function is as follows. Part of a membrane-bound complex that couples electron transfer with translocation of ions across the membrane. Couples electron transfer from reduced ferredoxin to NAD(+) with translocation of H(+) out of the cell. Essential for energy conservation during autotrophic growth. Contributes to ATP synthesis during heterotrophic growth. The chain is Proton-translocating ferredoxin:NAD(+) oxidoreductase complex subunit G from Clostridium ljungdahlii (strain ATCC 55383 / DSM 13528 / PETC).